A 490-amino-acid polypeptide reads, in one-letter code: Aspartyl/glutamyl-tRNA(Asn/Gln) amidotransferase subunit B (490 aa).

This sequence belongs to the GatB/GatE family. GatB subfamily. Heterotrimer of A, B and C subunits.

It catalyses the reaction L-glutamyl-tRNA(Gln) + L-glutamine + ATP + H2O = L-glutaminyl-tRNA(Gln) + L-glutamate + ADP + phosphate + H(+). The catalysed reaction is L-aspartyl-tRNA(Asn) + L-glutamine + ATP + H2O = L-asparaginyl-tRNA(Asn) + L-glutamate + ADP + phosphate + 2 H(+). Its function is as follows. Allows the formation of correctly charged Asn-tRNA(Asn) or Gln-tRNA(Gln) through the transamidation of misacylated Asp-tRNA(Asn) or Glu-tRNA(Gln) in organisms which lack either or both of asparaginyl-tRNA or glutaminyl-tRNA synthetases. The reaction takes place in the presence of glutamine and ATP through an activated phospho-Asp-tRNA(Asn) or phospho-Glu-tRNA(Gln). In Methylobacterium sp. (strain 4-46), this protein is Aspartyl/glutamyl-tRNA(Asn/Gln) amidotransferase subunit B.